The primary structure comprises 316 residues: Probable cell division protein WhiA (316 aa).

The H-T-H motif DNA-binding region spans Thr275–Ala309.

It belongs to the WhiA family.

Functionally, involved in cell division and chromosome segregation. In Bacillus cereus (strain B4264), this protein is Probable cell division protein WhiA.